The sequence spans 130 residues: Small ribosomal subunit protein uS9 (130 aa).

It belongs to the universal ribosomal protein uS9 family.

The polypeptide is Small ribosomal subunit protein uS9 (Stutzerimonas stutzeri (strain A1501) (Pseudomonas stutzeri)).